We begin with the raw amino-acid sequence, 174 residues long: Flavodoxin 1 (174 aa).

Residues 4–168 form the Flavodoxin-like domain; sequence IGIFYGSSSG…RLERWIAVLQ (165 aa). Residues 10 to 14 and 89 to 122 contribute to the FMN site; these read SSSGV and LFGA…ALVG.

FMN serves as cofactor.

Functionally, flavodoxins are low-potential electron donors to a number of redox enzymes. AvFld 1 is able to donate electrons to the assimilatory nitrate reductase of A.vinelandii to catalyze the reduction of nitrate to nitrite. This is Flavodoxin 1 from Azotobacter vinelandii (strain DJ / ATCC BAA-1303).